The chain runs to 215 residues: Adenylate kinase (215 aa).

10–15 lines the ATP pocket; the sequence is GAGKGT. Positions 30 to 59 are NMP; it reads STGDMFRAAMKNETEMGKLAKSFIDKGELV. Residues Thr31, Arg36, 57–59, 86–89, and Gln93 each bind AMP; these read ELV and GYPR. The interval 127–165 is LID; sequence GRYICRNCGATYHKIFNPTKVEGTCDVCGSHDLYQRADD. Arg128 lines the ATP pocket. Cys131 and Cys134 together coordinate Zn(2+). 137–138 is a binding site for ATP; sequence TY. Zn(2+)-binding residues include Cys151 and Cys154. AMP-binding residues include Arg162 and Arg173. Residue Gln201 coordinates ATP.

The protein belongs to the adenylate kinase family. In terms of assembly, monomer.

Its subcellular location is the cytoplasm. The catalysed reaction is AMP + ATP = 2 ADP. The protein operates within purine metabolism; AMP biosynthesis via salvage pathway; AMP from ADP: step 1/1. Its function is as follows. Catalyzes the reversible transfer of the terminal phosphate group between ATP and AMP. Plays an important role in cellular energy homeostasis and in adenine nucleotide metabolism. This Lactococcus lactis subsp. cremoris (strain SK11) protein is Adenylate kinase.